Reading from the N-terminus, the 126-residue chain is Urease subunit beta (126 aa).

Belongs to the urease beta subunit family. In terms of assembly, heterotrimer of UreA (gamma), UreB (beta) and UreC (alpha) subunits. Three heterotrimers associate to form the active enzyme.

The protein localises to the cytoplasm. It carries out the reaction urea + 2 H2O + H(+) = hydrogencarbonate + 2 NH4(+). It functions in the pathway nitrogen metabolism; urea degradation; CO(2) and NH(3) from urea (urease route): step 1/1. The chain is Urease subunit beta from Frankia casuarinae (strain DSM 45818 / CECT 9043 / HFP020203 / CcI3).